We begin with the raw amino-acid sequence, 712 residues long: Polyribonucleotide nucleotidyltransferase (712 aa).

Residues D487 and D493 each coordinate Mg(2+). The 60-residue stretch at 554 to 613 (PKIITMTINPDKIRDVIGPSGKQINKIIEETGVKIDIEQDGTVFISSINQEMNDKAKKII) folds into the KH domain. The S1 motif domain maps to 623-691 (GEIYEGKVKR…KQGRVNLSRK (69 aa)).

It belongs to the polyribonucleotide nucleotidyltransferase family. It depends on Mg(2+) as a cofactor.

The protein resides in the cytoplasm. It carries out the reaction RNA(n+1) + phosphate = RNA(n) + a ribonucleoside 5'-diphosphate. Functionally, involved in mRNA degradation. Catalyzes the phosphorolysis of single-stranded polyribonucleotides processively in the 3'- to 5'-direction. The polypeptide is Polyribonucleotide nucleotidyltransferase (Bacillus cereus (strain AH820)).